Here is an 88-residue protein sequence, read N- to C-terminus: Fe-S protein maturation auxiliary factor SufT (88 aa).

The protein belongs to the MIP18 family.

Involved in the maturation of iron-sulfur (Fe-S) proteins. May function as a Fe-S cluster carrier. Is required for S.aureus growth under conditions that impose a high demand for lipoic acid, likely via a role in the maturation of the lipoate synthase LipA. Is non-essential for growth in conditions that impose a low demand for lipoic acid or Fe-S clusters, such as fermentative growth. Also seems to be involved in the maturation of AcnA, LeuCD and IlvD proteins, that utilize Fe-S cluster cofactors, and its role increases under conditions of high-demand for Fe-S clusters (respiratory growth). Is not involved in the repair of Fe-S clusters damaged by reactive oxygen species or in the physical protection of Fe-S clusters from oxidants. Displays synergy with the Fe-S cluster carrier Nfu. In Staphylococcus aureus (strain USA300), this protein is Fe-S protein maturation auxiliary factor SufT.